Here is a 741-residue protein sequence, read N- to C-terminus: Transcription activator of gluconeogenesis BDBG_05438 (741 aa).

The interval 1 to 70 (MTASTRNGSP…NAKDPLRPRR (70 aa)) is disordered. Residues 25–61 (KSMTTTPANPPETKSQTNGKGSGTAQSSQKPASTSAN) show a composition bias toward polar residues. The segment at residues 77 to 105 (CFACQRAHLTCGDERPCQRCIKRGLQDAC) is a DNA-binding region (zn(2)-C6 fungal-type). Disordered regions lie at residues 135–163 (QANTTRNIPNQRGNASNSNSNKVSRQSVS), 202–239 (SVFHAQSPSSTQNFDLSSNPQTQNLSSAMSQTASSVSG), 285–321 (GAGDTPPSDSATQRGSIGRSSGTFTAQNFGDSANNQS), 401–421 (TNLMHPTNTPQQSRISTPGLK), 559–590 (GSSLSSASSVRGSSTFTPRNNNTHNSIDPHTG), and 655–741 (FHGK…AKRG). Over residues 202–226 (SVFHAQSPSSTQNFDLSSNPQTQNL) the composition is skewed to polar residues. Residues 227–238 (SSAMSQTASSVS) show a composition bias toward low complexity. Polar residues-rich tracts occupy residues 291 to 321 (PSDSATQRGSIGRSSGTFTAQNFGDSANNQS) and 401 to 416 (TNLMHPTNTPQQSRIS). A compositionally biased stretch (low complexity) spans 560-572 (SSLSSASSVRGSS). Residues 573-586 (TFTPRNNNTHNSID) show a composition bias toward polar residues. Low complexity predominate over residues 672 to 718 (TGTTTSGDVATTTATGTSTSNGANANTNGNNTNPNDPSTAASSSASS). Over residues 723–732 (RSNHLGKRGG) the composition is skewed to basic residues.

It belongs to the ERT1/acuK family.

It localises to the nucleus. Functionally, transcription factor which regulates nonfermentable carbon utilization. Activator of gluconeogenetic genes. In Blastomyces gilchristii (strain SLH14081) (Blastomyces dermatitidis), this protein is Transcription activator of gluconeogenesis BDBG_05438.